Reading from the N-terminus, the 383-residue chain is Glutaminyl-peptide cyclotransferase-like protein (383 aa).

The disordered stretch occupies residues 1–25 (MPSGGRGRPRLQVGERSLLERPSPP). Residues 35–57 (LLPQLLLALTVASVFYTIWRIWH) form a helical membrane-spanning segment. A disulfide bridge links Cys-168 with Cys-192. Asp-187 serves as a coordination point for Zn(2+). Glu-226 (proton acceptor) is an active-site residue. Glu-227 serves as a coordination point for Zn(2+). Asp-270 functions as the Proton acceptor in the catalytic mechanism. His-352 is a Zn(2+) binding site.

Belongs to the glutaminyl-peptide cyclotransferase family.

The protein localises to the golgi apparatus membrane. The catalysed reaction is N-terminal L-glutaminyl-[peptide] = N-terminal 5-oxo-L-prolyl-[peptide] + NH4(+). Its function is as follows. Responsible for the biosynthesis of pyroglutamyl peptides. This is Glutaminyl-peptide cyclotransferase-like protein (QPCTL) from Bos taurus (Bovine).